We begin with the raw amino-acid sequence, 243 residues long: Leucyl/phenylalanyl-tRNA--protein transferase (243 aa).

This sequence belongs to the L/F-transferase family.

It is found in the cytoplasm. The catalysed reaction is N-terminal L-lysyl-[protein] + L-leucyl-tRNA(Leu) = N-terminal L-leucyl-L-lysyl-[protein] + tRNA(Leu) + H(+). It carries out the reaction N-terminal L-arginyl-[protein] + L-leucyl-tRNA(Leu) = N-terminal L-leucyl-L-arginyl-[protein] + tRNA(Leu) + H(+). It catalyses the reaction L-phenylalanyl-tRNA(Phe) + an N-terminal L-alpha-aminoacyl-[protein] = an N-terminal L-phenylalanyl-L-alpha-aminoacyl-[protein] + tRNA(Phe). Functions in the N-end rule pathway of protein degradation where it conjugates Leu, Phe and, less efficiently, Met from aminoacyl-tRNAs to the N-termini of proteins containing an N-terminal arginine or lysine. The polypeptide is Leucyl/phenylalanyl-tRNA--protein transferase (Xylella fastidiosa (strain 9a5c)).